The chain runs to 344 residues: uncharacterized protein (344 aa).

This is an uncharacterized protein from Caenorhabditis elegans.